The sequence spans 202 residues: 3-isopropylmalate dehydratase small subunit (202 aa).

It belongs to the LeuD family. LeuD type 1 subfamily. In terms of assembly, heterodimer of LeuC and LeuD.

The enzyme catalyses (2R,3S)-3-isopropylmalate = (2S)-2-isopropylmalate. The protein operates within amino-acid biosynthesis; L-leucine biosynthesis; L-leucine from 3-methyl-2-oxobutanoate: step 2/4. Catalyzes the isomerization between 2-isopropylmalate and 3-isopropylmalate, via the formation of 2-isopropylmaleate. The polypeptide is 3-isopropylmalate dehydratase small subunit (Paenarthrobacter aurescens (strain TC1)).